A 367-amino-acid chain; its full sequence is Cycloaraneosene synthase sdnA (367 aa).

An N-terminal signal peptide occupies residues 1–24 (MSLYGLFTLATSYLPSVGGGAALA). 3 residues coordinate Mg(2+): aspartate 115, asparagine 260, and serine 264. The DDXXD motif signature appears at 115–119 (DDQFD). N-linked (GlcNAc...) asparagine glycosylation is present at asparagine 276.

This sequence belongs to the terpene synthase family. Requires Mg(2+) as cofactor.

It carries out the reaction (2E,6E,10E)-geranylgeranyl diphosphate = cycloaraneosene + diphosphate. The protein operates within antibiotic biosynthesis. Its function is as follows. Cycloaraneosene synthase; part of the gene cluster that mediates the biosynthesis of sordarin and hypoxysordarin, glycoside antibiotics with a unique tetracyclic diterpene aglycone structure. First, the geranylgeranyl diphosphate synthase sdnC constructs GGDP from farnesyl diphosphate and isopentenyl diphosphate. The diterpene cyclase sdnA then catalyzes the cyclization of GGDP to afford cycloaraneosene. Cycloaraneosene is then hydroxylated four times by the putative cytochrome P450 monooxygenases sdnB, sdnE, sdnF and sdnH to give a hydroxylated cycloaraneosene derivative such as cycloaraneosene-8,9,13,19-tetraol. Although the order of the hydroxylations is unclear, at least C8, C9 and C13 of the cycloaraneosene skeleton are hydroxylated before the sordaricin formation. Dehydration of the 13-hydroxy group of the hydroxylated cycloaraneosene derivative might be catalyzed by an unassigned hypothetical protein such as sdnG and sdnP to construct the cyclopentadiene moiety. The FAD-dependent oxidoreductase sdnN is proposed to catalyze the oxidation at C9 of the hydroxylated cycloaraneosene derivative and also catalyze the Baeyer-Villiger oxidation to give the lactone intermediate. The presumed lactone intermediate would be hydrolyzed to give an acrolein moiety and a carboxylate moiety. Then, [4+2]cycloaddition would occur between the acrolein moiety and the cyclopentadiene moiety to give sordaricin. SdnN might also be involved in the [4+2]cycloaddition after the hypothesized oxidation to accommodate the oxidized product and prompt the [4+2]cycloaddition. GDP-6-deoxy-D-altrose may be biosynthesized from GDP-D-mannose by the putative GDP-mannose-4,6-dehydratase sdnI and the short-chain dehydrogenase sdnK. The glycosyltransferase sdnJ catalyzes the attachment of 6-deoxy-D-altrose onto the 19-hydroxy group of sordaricin to give 4'-O-demethylsordarin. The methyltransferase sdnD would complete the biosynthesis of sordarin. Sordarin can be further modified into hypoxysordarin. The unique acyl chain at the 3'-hydroxy group of hypoxysordarin would be constructed by an iterative type I PKS sdnO and the trans-acting polyketide methyltransferase sdnL. SdnL would be responsible for the introduction of an alpha-methyl group of the polyketide chain. Alternatively, the beta-lactamase-like protein sdnR might be responsible for the cleavage and transfer of the polyketide chain from the PKS sdnO to sordarin. Two putative cytochrome P450 monooxygenases, sdnQ and sdnT, might catalyze the epoxidations of the polyketide chain to complete the biosynthesis of hypoxysordarin. Transcriptional regulators sdnM and sdnS are presumably encoded for the transcriptional regulation of the expression of the sdn gene cluster. This chain is Cycloaraneosene synthase sdnA, found in Sordaria araneosa (Pleurage araneosa).